The sequence spans 135 residues: C-type natriuretic peptide (135 aa).

Residues 1–25 (MSGHTSFYCGLLLLLLIQVQARPRA) form the signal peptide. A propeptide spanning residues 26 to 113 (DDSLQVLSRL…PLRFKGRSKK (88 aa)) is cleaved from the precursor. A disordered region spans residues 46–67 (EELNNEAQEISPAASLPDLNTD). A disulfide bond links Cys-119 and Cys-135.

The protein belongs to the natriuretic peptide family.

The protein resides in the secreted. Hormone which may be vasoactive and natriuretic. Has a cGMP-stimulating activity. In Squalus acanthias (Spiny dogfish), this protein is C-type natriuretic peptide.